We begin with the raw amino-acid sequence, 813 residues long: Protein mac-1 (813 aa).

Coiled coils occupy residues 58–89 (VREA…VQEI) and 122–152 (SDDS…TVLN). 2 disordered regions span residues 97–131 (TRKR…ERAA) and 152–193 (NLYT…GAVS). A compositionally biased stretch (polar residues) spans 158 to 172 (SAPSTPVSTPKNQAT). The segment covering 175-191 (PPGASAAPPALPRGLGA) has biased composition (low complexity). ATP is bound by residues 246–253 (GPPGCGKT) and 575–582 (GPPGCGKT).

The protein belongs to the AAA ATPase family. As to quaternary structure, found in a complex composed of ced-3, ced-4 and mac-1 or of ced-9, ced-4 and mac-1. Within the complex, interacts with ced-4.

Probably together with ced-9, plays a modest role in preventing ced-4 and caspase ced-3-mediated apoptosis. The polypeptide is Protein mac-1 (Caenorhabditis elegans).